The chain runs to 417 residues: Gamma-glutamyl phosphate reductase (417 aa).

Belongs to the gamma-glutamyl phosphate reductase family.

The protein localises to the cytoplasm. It carries out the reaction L-glutamate 5-semialdehyde + phosphate + NADP(+) = L-glutamyl 5-phosphate + NADPH + H(+). It participates in amino-acid biosynthesis; L-proline biosynthesis; L-glutamate 5-semialdehyde from L-glutamate: step 2/2. Its function is as follows. Catalyzes the NADPH-dependent reduction of L-glutamate 5-phosphate into L-glutamate 5-semialdehyde and phosphate. The product spontaneously undergoes cyclization to form 1-pyrroline-5-carboxylate. This chain is Gamma-glutamyl phosphate reductase, found in Shigella boydii serotype 18 (strain CDC 3083-94 / BS512).